The chain runs to 156 residues: WASQVSENRPVCKAIIQGKQFEGLVDTGADVSIIALNQWPKNWPKQKAVTGLVGIGTASEVYQSTEILHCLGPDNQESTVQPMITSIPLNLWGRDLLQQWGAEITMPTPLYSPTSQKIMTKMGYIPGKGLGKNEDGIKVPVEAKINQKREGIGYPF.

The Peptidase A2 domain maps to 21-96 (FEGLVDTGAD…IPLNLWGRDL (76 aa)). Asp-26 is an active-site residue. The G-patch domain maps to 111–156 (YSPTSQKIMTKMGYIPGKGLGKNEDGIKVPVEAKINQKREGIGYPF).

Belongs to the peptidase A2 family. HERV class-II K(HML-2) subfamily. In terms of assembly, active as a homodimer. In terms of processing, autoproteolytically processed at the N-terminus. Expected C-terminal autoprocessing not detected. The sequence shown is that of the processed Pro protein.

The enzyme catalyses Processing at the authentic HIV-1 PR recognition site and release of the mature p17 matrix and the p24 capsid protein, as a result of the cleavage of the -SQNY-|-PIVQ- cleavage site.. Functionally, retroviral proteases have roles in the processing of the primary translation products and the maturation of the viral particle. Endogenous Pro proteins may have kept, lost or modified their original function during evolution. In Homo sapiens (Human), this protein is Endogenous retrovirus group K member 21 Pro protein (ERVK-21).